A 274-amino-acid polypeptide reads, in one-letter code: 3',5'-cyclic adenosine monophosphate phosphodiesterase CpdA (274 aa).

Residues aspartate 21, histidine 23, aspartate 63, asparagine 93, histidine 163, histidine 202, and histidine 204 each coordinate Fe cation. Residues histidine 23, aspartate 63, and 93–94 (NH) contribute to the AMP site. Residue histidine 204 coordinates AMP.

It belongs to the cyclic nucleotide phosphodiesterase class-III family. Fe(2+) serves as cofactor.

The catalysed reaction is 3',5'-cyclic AMP + H2O = AMP + H(+). In terms of biological role, hydrolyzes cAMP to 5'-AMP. Plays an important regulatory role in modulating the intracellular concentration of cAMP, thereby influencing cAMP-dependent processes. May coordinate responses to nutritional stress, ensuring optimal competence development. The polypeptide is 3',5'-cyclic adenosine monophosphate phosphodiesterase CpdA (Haemophilus influenzae (strain ATCC 51907 / DSM 11121 / KW20 / Rd)).